The following is a 272-amino-acid chain: Formamidopyrimidine-DNA glycosylase (272 aa).

Residue Pro-2 is the Schiff-base intermediate with DNA of the active site. Glu-3 functions as the Proton donor in the catalytic mechanism. The Proton donor; for beta-elimination activity role is filled by Lys-58. DNA-binding residues include His-92, Arg-111, and Arg-153. The FPG-type zinc-finger motif lies at 238-272 (AVYGRQGQSCPRCGGLVERCRLGQRSTFFCPACQR). Arg-262 (proton donor; for delta-elimination activity) is an active-site residue.

The protein belongs to the FPG family. Monomer. It depends on Zn(2+) as a cofactor.

It catalyses the reaction Hydrolysis of DNA containing ring-opened 7-methylguanine residues, releasing 2,6-diamino-4-hydroxy-5-(N-methyl)formamidopyrimidine.. The catalysed reaction is 2'-deoxyribonucleotide-(2'-deoxyribose 5'-phosphate)-2'-deoxyribonucleotide-DNA = a 3'-end 2'-deoxyribonucleotide-(2,3-dehydro-2,3-deoxyribose 5'-phosphate)-DNA + a 5'-end 5'-phospho-2'-deoxyribonucleoside-DNA + H(+). Involved in base excision repair of DNA damaged by oxidation or by mutagenic agents. Acts as a DNA glycosylase that recognizes and removes damaged bases. Has a preference for oxidized purines, such as 7,8-dihydro-8-oxoguanine (8-oxoG). Has AP (apurinic/apyrimidinic) lyase activity and introduces nicks in the DNA strand. Cleaves the DNA backbone by beta-delta elimination to generate a single-strand break at the site of the removed base with both 3'- and 5'-phosphates. The protein is Formamidopyrimidine-DNA glycosylase of Laribacter hongkongensis (strain HLHK9).